Reading from the N-terminus, the 410-residue chain is Aminopeptidase AmpS (410 aa).

A divalent metal cation-binding residues include glutamate 250, glutamate 316, glutamate 340, histidine 345, histidine 378, and aspartate 380.

Belongs to the peptidase M29 family. It depends on Co(2+) as a cofactor. Zn(2+) serves as cofactor. Requires Mg(2+) as cofactor.

Its function is as follows. Metal-dependent exopeptidase. The sequence is that of Aminopeptidase AmpS (ampS) from Bacillus subtilis (strain 168).